Reading from the N-terminus, the 323-residue chain is Thiamine-monophosphate kinase (323 aa).

D30, S45, T46, and D47 together coordinate Mg(2+). Residue H54 participates in substrate binding. Residues D75 and D122 each coordinate Mg(2+). ATP contacts are provided by residues 121 to 122 (GD) and R146. D212 is a Mg(2+) binding site. S214 is an ATP binding site. Position 215 (D215) interacts with Mg(2+). Residues E263 and F319 each contribute to the substrate site.

The protein belongs to the thiamine-monophosphate kinase family.

The catalysed reaction is thiamine phosphate + ATP = thiamine diphosphate + ADP. It participates in cofactor biosynthesis; thiamine diphosphate biosynthesis; thiamine diphosphate from thiamine phosphate: step 1/1. Functionally, catalyzes the ATP-dependent phosphorylation of thiamine-monophosphate (TMP) to form thiamine-pyrophosphate (TPP), the active form of vitamin B1. The sequence is that of Thiamine-monophosphate kinase from Buchnera aphidicola subsp. Acyrthosiphon pisum (strain APS) (Acyrthosiphon pisum symbiotic bacterium).